A 144-amino-acid chain; its full sequence is Large ribosomal subunit protein uL15 (144 aa).

Residues Met1 to Arg60 are disordered. The segment covering Arg21–Gly31 has biased composition (gly residues).

The protein belongs to the universal ribosomal protein uL15 family. In terms of assembly, part of the 50S ribosomal subunit.

In terms of biological role, binds to the 23S rRNA. The sequence is that of Large ribosomal subunit protein uL15 from Hahella chejuensis (strain KCTC 2396).